Reading from the N-terminus, the 114-residue chain is Cytochrome c oxidase subunit 7A2-like, mitochondrial (114 aa).

The transit peptide at 1 to 55 directs the protein to the mitochondrion; the sequence is MYYKFSGFTQKLAGAWASEAYSPQGLKPVVSTEAPPIIFATPTKLTSDSTVYDYA. N6-acetyllysine is present on Lys69. A helical membrane pass occupies residues 82–107; that stretch reads PDQMLYRTTMALTVGGTIYCLIALYM.

It belongs to the cytochrome c oxidase VIIa family. As to quaternary structure, interacts with the mitochondrial respiratory complexes III (CIII) and IV (CIV), promoting their association.

Its subcellular location is the mitochondrion inner membrane. Functionally, assembly factor that mediates the formation of some mitochondrial respiratory supercomplexes (respirasomes), thereby promoting oxidative phosphorylation and energy metabolism. Acts as a molecular adapter that associates with both mitochondrial respiratory complexes III (CIII) and IV (CIV), promoting their association. Mediates the formation of various mitochondrial respiratory supercomplexes, such as MCIII(2)IV(2), composed of two CIII and two CIV, and the CS-respirasome (MCI(1)III(2)IV(2)), composed of one CI, two CIII and two CIV. Not involved in the formation of the canonical respirasome (MCI(1)III(2)IV(1)), composed of one CI, two CIII and one CIV. The formation of different respirasomes is important for cell adaptation to oxygen conditions and prevent metabolic exhaustion: supercomplexes mediated by COX7A2L/SCAF1 are required to maintain oxidative phosphorylation upon low oxygen conditions and promote metabolic rewiring toward glycolysis. The protein is Cytochrome c oxidase subunit 7A2-like, mitochondrial of Homo sapiens (Human).